The following is a 258-amino-acid chain: Allene oxide cyclase 3, chloroplastic (258 aa).

The N-terminal 56 residues, 1 to 56 (MASSSAAMSLESISMTTLNNLSRNHQSHRSSLLGFSRSFQNLGISSNGPDFSSRSR), are a transit peptide targeting the chloroplast.

The protein belongs to the allene oxide cyclase family. In terms of tissue distribution, highly expressed in fully developed leaves.

It is found in the plastid. The protein localises to the chloroplast. The enzyme catalyses (9Z,13S,15Z)-12,13-epoxyoctadeca-9,11,15-trienoate = (9S,13S,15Z)-12-oxophyto-10,15-dienoate. Involved in the production of 12-oxo-phytodienoic acid (OPDA), a precursor of jasmonic acid. The sequence is that of Allene oxide cyclase 3, chloroplastic (AOC3) from Arabidopsis thaliana (Mouse-ear cress).